The chain runs to 276 residues: Probable endonuclease 4 (276 aa).

The Zn(2+) site is built by His65, His105, Glu141, Asp175, His178, His210, Asp223, His225, and Glu255.

It belongs to the AP endonuclease 2 family. Requires Zn(2+) as cofactor.

The enzyme catalyses Endonucleolytic cleavage to 5'-phosphooligonucleotide end-products.. Its function is as follows. Endonuclease IV plays a role in DNA repair. It cleaves phosphodiester bonds at apurinic or apyrimidinic (AP) sites, generating a 3'-hydroxyl group and a 5'-terminal sugar phosphate. The protein is Probable endonuclease 4 of Symbiobacterium thermophilum (strain DSM 24528 / JCM 14929 / IAM 14863 / T).